The following is a 276-amino-acid chain: UPF0276 protein PA4106 (276 aa).

This sequence belongs to the UPF0276 family.

The sequence is that of UPF0276 protein PA4106 from Pseudomonas aeruginosa (strain ATCC 15692 / DSM 22644 / CIP 104116 / JCM 14847 / LMG 12228 / 1C / PRS 101 / PAO1).